The chain runs to 408 residues: Putative odorant receptor 92a (408 aa).

Topologically, residues 1–52 (MLFRKRKPKSDDEVITFDELTRFPMTFYKTIGEDLYSDRDPNVIRRYLLRFY) are cytoplasmic. A helical transmembrane segment spans residues 53 to 73 (LVLGFLNFNAYVVGEIAYFIV). Residue His74 is a topological domain, extracellular. A helical transmembrane segment spans residues 75-95 (IMSTTTLLEATAVAPCIGFSF). The Cytoplasmic portion of the chain corresponds to 96–144 (MADFKQFGLTVNRKRLVRLLDDLKEIFPLDLEAQRKYNVSFYRKHMNRV). Residues 145-165 (MTLFTILCMTYTSSFSFYPAI) form a helical membrane-spanning segment. Topologically, residues 166-209 (KSTIKYYLMGSEIFERNYGFHILFPYDAETDLTVYWFSYWGLAH) are extracellular. The helical transmembrane segment at 210–230 (CAYVAGVSYVCVDLLLIATIT) threads the bilayer. The Cytoplasmic portion of the chain corresponds to 231-276 (QLTMHFNFIANDLEAYEGGDHTDEENIKYLHNLVVYHARALDLSEE). The chain crosses the membrane as a helical span at residues 277 to 301 (VNNIFSFLILWNFIAASLVICFAGF). The Extracellular segment spans residues 302-310 (QITASNVED). A helical transmembrane segment spans residues 311-331 (IVLYFIFFSASLVQVFVVCYY). At 332-378 (GDEMISSSSRIGHSAFNQNWLPCSTKYKRILQFIIARSQKPASIRPP) the chain is on the cytoplasmic side. A helical membrane pass occupies residues 379-399 (TFPPISFNTFMKVISMSYQFF). Over 400–408 (ALLRTTYYG) the chain is Extracellular.

It belongs to the insect chemoreceptor superfamily. Heteromeric odorant receptor channel (TC 1.A.69) family. Or49a subfamily. As to quaternary structure, interacts with Orco. Complexes exist early in the endomembrane system in olfactory sensory neurons (OSNs), coupling these complexes to the conserved ciliary trafficking pathway.

It is found in the cell membrane. In terms of biological role, odorant receptor which mediates acceptance or avoidance behavior, depending on its substrates. The odorant receptor repertoire encodes a large collection of odor stimuli that vary widely in identity, intensity, and duration. May form a complex with Orco to form odorant-sensing units, providing sensitive and prolonged odorant signaling and calcium permeability. This Drosophila melanogaster (Fruit fly) protein is Putative odorant receptor 92a (Or92a).